The primary structure comprises 243 residues: Cyclin-dependent kinase 20 (243 aa).

One can recognise a Protein kinase domain in the interval 4–243 (YCILGRIGEG…IHLSCRFLSV (240 aa)). ATP-binding positions include 10–18 (IGEGAHGIV) and Lys33. Asp127 functions as the Proton acceptor in the catalytic mechanism.

The protein belongs to the protein kinase superfamily. CMGC Ser/Thr protein kinase family. CDC2/CDKX subfamily. As to quaternary structure, monomer. Interacts with TBC1D32 and MAK.

The protein resides in the nucleus. It is found in the cytoplasm. It localises to the cell projection. The protein localises to the cilium. It carries out the reaction L-seryl-[protein] + ATP = O-phospho-L-seryl-[protein] + ADP + H(+). The catalysed reaction is L-threonyl-[protein] + ATP = O-phospho-L-threonyl-[protein] + ADP + H(+). Functionally, required for high-level Shh responses in the developing neural tube. Together with TBC1D32, controls the structure of the primary cilium by coordinating assembly of the ciliary membrane and axoneme, allowing GLI2 to be properly activated in response to SHH signaling. Involved in cell growth. Activates CDK2, a kinase involved in the control of the cell cycle, by phosphorylating residue 'Thr-160'. This Macaca mulatta (Rhesus macaque) protein is Cyclin-dependent kinase 20 (CDK20).